Here is a 201-residue protein sequence, read N- to C-terminus: GTP cyclohydrolase 1 (201 aa).

Zn(2+) is bound by residues cysteine 90, histidine 93, and cysteine 163.

This sequence belongs to the GTP cyclohydrolase I family. Homomer.

It catalyses the reaction GTP + H2O = 7,8-dihydroneopterin 3'-triphosphate + formate + H(+). It participates in cofactor biosynthesis; 7,8-dihydroneopterin triphosphate biosynthesis; 7,8-dihydroneopterin triphosphate from GTP: step 1/1. The sequence is that of GTP cyclohydrolase 1 from Streptomyces griseus subsp. griseus (strain JCM 4626 / CBS 651.72 / NBRC 13350 / KCC S-0626 / ISP 5235).